The following is a 534-amino-acid chain: Major facilitator-type transporter sor6 (534 aa).

N-linked (GlcNAc...) asparagine glycosylation is found at Asn-29 and Asn-36. A run of 12 helical transmembrane segments spans residues 66-86 (WFLTSIVTFSVFAVTFTSSAY), 103-123 (LFITGVSVFVLGFAIGPAVWG), 160-180 (AMVAFMAGSAGSPNIATLIVL), 182-202 (FLAGTFGGSPLVNSGGAIADL), 209-229 (GLAMTIYCVAPFLGPILGPIV), 241-261 (WVQGMCTIFIGVIGIIGVIFV), 318-338 (IVLIASLYMAIIYGTVYMFLG), 354-374 (FGGLAFLGMMVGIIIGLGYAI), 395-415 (LPPAIAGAVALPIGMFAFAWT), 424-444 (VSIVLSAPFGFGVVLVILPIV), 456-476 (ASVLAAAAVFRSIMGAVFPLF), and 486-506 (IHWATSIPAFLTLVCMPFPFF).

It belongs to the major facilitator superfamily. Sugar transporter (TC 2.A.1.1) family.

It is found in the membrane. Functionally, major facilitator-type transporter; part of the gene cluster that mediates the biosynthesis of sorbicillinoids, a diverse group of yellow secondary metabolites that restrict growth of competing pathogenic fungi but not of bacteria. The protein is Major facilitator-type transporter sor6 of Hypocrea jecorina (strain QM6a) (Trichoderma reesei).